The chain runs to 305 residues: GMP synthase [glutamine-hydrolyzing] subunit B (305 aa).

Residues 2 to 184 enclose the GMPS ATP-PPase domain; sequence VNTERFIQQA…LGLPREIQHR (183 aa). Residue 29–35 participates in ATP binding; the sequence is SGGVDSS.

Heterodimer composed of a glutamine amidotransferase subunit (A) and a GMP-binding subunit (B).

The catalysed reaction is XMP + L-glutamine + ATP + H2O = GMP + L-glutamate + AMP + diphosphate + 2 H(+). It participates in purine metabolism; GMP biosynthesis; GMP from XMP (L-Gln route): step 1/1. Its function is as follows. Catalyzes the synthesis of GMP from XMP. In Methanosphaerula palustris (strain ATCC BAA-1556 / DSM 19958 / E1-9c), this protein is GMP synthase [glutamine-hydrolyzing] subunit B.